Here is a 98-residue protein sequence, read N- to C-terminus: DNA/RNA-binding protein Alba (98 aa).

Lys16 is modified (N6-acetyllysine).

It belongs to the histone-like Alba family. In terms of processing, acetylated. Acetylation at Lys-16 decreases DNA-binding affinity.

It localises to the cytoplasm. Its subcellular location is the chromosome. In terms of biological role, binds double-stranded DNA tightly but without sequence specificity. Involved in DNA compaction. The polypeptide is DNA/RNA-binding protein Alba (Metallosphaera sedula (strain ATCC 51363 / DSM 5348 / JCM 9185 / NBRC 15509 / TH2)).